The chain runs to 284 residues: ATP synthase subunit a (284 aa).

5 consecutive transmembrane segments (helical) span residues 47–67 (AFHL…LIFF), 108–128 (VAPL…MDLV), 156–176 (VPTA…ILII), 233–253 (MIFI…SLPW), and 254–274 (AIFH…LVIV).

The protein belongs to the ATPase A chain family. As to quaternary structure, F-type ATPases have 2 components, CF(1) - the catalytic core - and CF(0) - the membrane proton channel. CF(1) has five subunits: alpha(3), beta(3), gamma(1), delta(1), epsilon(1). CF(0) has three main subunits: a(1), b(2) and c(9-12). The alpha and beta chains form an alternating ring which encloses part of the gamma chain. CF(1) is attached to CF(0) by a central stalk formed by the gamma and epsilon chains, while a peripheral stalk is formed by the delta and b chains.

It localises to the cell inner membrane. Its function is as follows. Key component of the proton channel; it plays a direct role in the translocation of protons across the membrane. The chain is ATP synthase subunit a from Ruthia magnifica subsp. Calyptogena magnifica.